The following is a 95-amino-acid chain: Sec-independent protein translocase protein TatA (95 aa).

Residues 1–21 (MGGISIWQLLIIALIVVLLFG) traverse the membrane as a helical segment. A compositionally biased stretch (basic and acidic residues) spans 50-61 (KALEDNAADKPA). The interval 50-95 (KALEDNAADKPAADAAKVTETAKVAETAPVAETAEKKAESKGKEQA) is disordered. A compositionally biased stretch (low complexity) spans 62-81 (ADAAKVTETAKVAETAPVAE). Over residues 82-95 (TAEKKAESKGKEQA) the composition is skewed to basic and acidic residues.

It belongs to the TatA/E family. The Tat system comprises two distinct complexes: a TatABC complex, containing multiple copies of TatA, TatB and TatC subunits, and a separate TatA complex, containing only TatA subunits. Substrates initially bind to the TatABC complex, which probably triggers association of the separate TatA complex to form the active translocon.

It is found in the cell inner membrane. Its function is as follows. Part of the twin-arginine translocation (Tat) system that transports large folded proteins containing a characteristic twin-arginine motif in their signal peptide across membranes. TatA could form the protein-conducting channel of the Tat system. The polypeptide is Sec-independent protein translocase protein TatA (Shewanella halifaxensis (strain HAW-EB4)).